The following is a 403-amino-acid chain: S-adenosylmethionine synthase (403 aa).

Histidine 17 serves as a coordination point for ATP. Residue aspartate 19 coordinates Mg(2+). Glutamate 45 serves as a coordination point for K(+). The L-methionine site is built by glutamate 58 and glutamine 104. The segment at 104–114 (QSPDIAQGVDT) is flexible loop. Residues 179–181 (DGK), 250–251 (KF), aspartate 259, 265–266 (RK), alanine 282, and lysine 286 each bind ATP. Residue aspartate 259 participates in L-methionine binding. Lysine 290 provides a ligand contact to L-methionine.

Belongs to the AdoMet synthase family. In terms of assembly, homotetramer; dimer of dimers. Mg(2+) serves as cofactor. It depends on K(+) as a cofactor.

The protein localises to the cytoplasm. The enzyme catalyses L-methionine + ATP + H2O = S-adenosyl-L-methionine + phosphate + diphosphate. The protein operates within amino-acid biosynthesis; S-adenosyl-L-methionine biosynthesis; S-adenosyl-L-methionine from L-methionine: step 1/1. In terms of biological role, catalyzes the formation of S-adenosylmethionine (AdoMet) from methionine and ATP. The overall synthetic reaction is composed of two sequential steps, AdoMet formation and the subsequent tripolyphosphate hydrolysis which occurs prior to release of AdoMet from the enzyme. This chain is S-adenosylmethionine synthase, found in Mycobacterium tuberculosis (strain ATCC 25177 / H37Ra).